Here is a 509-residue protein sequence, read N- to C-terminus: Maturase K (509 aa).

The protein belongs to the intron maturase 2 family. MatK subfamily.

Its subcellular location is the plastid. The protein localises to the chloroplast. In terms of biological role, usually encoded in the trnK tRNA gene intron. Probably assists in splicing its own and other chloroplast group II introns. The chain is Maturase K from Jacaranda mimosifolia (Jacaranda).